The chain runs to 150 residues: MKRFILVLSFLSIIVAYPIQTNASPMPCSVILEPVDKNLKNAKGVALIYKVQLNPPSAARTNISILAVHLPAPSSFGNYDSYEGFATKPGEISWRFKLYPTPEEESPSWAGRIDTISAEMKNVKVQVRLSNSSTQKLGPSILTKNIESCY.

The signal sequence occupies residues M1–A23.

This chain is SPbeta prophage-derived uncharacterized protein YoqH (yoqH), found in Bacillus subtilis (strain 168).